Here is a 153-residue protein sequence, read N- to C-terminus: MSIEINNESAIEVDEPVIQRLVTYALDTLHVHPDAELAIVMVDEGAMEQLHVQWMDEPGPTDVLSFPMDELRPGTEDRPTPAGLLGDIVVCPQVAAEQAVTAGHSTMEEILLLTAHGILHLLGFDHAEPDEEREMFGLQRDILIGFAMSERGR.

3 residues coordinate Zn(2+): histidine 116, histidine 120, and histidine 126.

Belongs to the endoribonuclease YbeY family. Zn(2+) serves as cofactor.

The protein resides in the cytoplasm. Its function is as follows. Single strand-specific metallo-endoribonuclease involved in late-stage 70S ribosome quality control and in maturation of the 3' terminus of the 16S rRNA. This Clavibacter michiganensis subsp. michiganensis (strain NCPPB 382) protein is Endoribonuclease YbeY.